A 459-amino-acid polypeptide reads, in one-letter code: Probable Delta(5) fatty acid desaturase C (459 aa).

The Cytochrome b5 heme-binding domain occupies 9–87 (KKLYSWKEIS…LKQYEIGQVS (79 aa)). Residues His45 and His68 each coordinate heme. Transmembrane regions (helical) follow at residues 121–141 (FAFGIIARLIFVYWFLITSYY) and 151–171 (FYLNCLLAIVYSLSNSLFSLH). Residues 174-178 (HDACH) carry the Histidine box-1 motif. Residues 187 to 207 (VWKWLGATYDLFIGASFFYWC) traverse the membrane as a helical segment. The Histidine box-2 signature appears at 210–215 (HVIGHH). The next 2 helical transmembrane spans lie at 289–309 (FEIISFIIGKLVFIVFRFIIP) and 315–335 (LVNLLTYFFIAEFFFGLYLSF). Residues 394–398 (QVVHH) carry the Histidine box-3 motif.

The protein belongs to the fatty acid desaturase type 1 family. It depends on Fe cation as a cofactor.

Its subcellular location is the membrane. In Dictyostelium discoideum (Social amoeba), this protein is Probable Delta(5) fatty acid desaturase C.